The chain runs to 299 residues: Acetyl-hydrolase (299 aa).

An Involved in the stabilization of the negatively charged intermediate by the formation of the oxyanion hole motif is present at residues 73-75; the sequence is HGG. Catalysis depends on residues Ser143, Glu237, and His267.

This sequence belongs to the 'GDXG' lipolytic enzyme family.

It functions in the pathway secondary metabolite biosynthesis; bialaphos biosynthesis. In terms of biological role, this protein removes the N-acetyl group from bialaphos as one of the final steps of biosynthesis of phosphinothricin tripeptide (PTT), also known as bialaphos (BA), a natural-product antibiotic and potent herbicide. The sequence is that of Acetyl-hydrolase (bah) from Streptomyces hygroscopicus.